A 393-amino-acid chain; its full sequence is NADH-quinone oxidoreductase subunit D (393 aa).

The protein belongs to the complex I 49 kDa subunit family. As to quaternary structure, NDH-1 is composed of 14 different subunits. Subunits NuoB, C, D, E, F, and G constitute the peripheral sector of the complex.

The protein localises to the cell inner membrane. It catalyses the reaction a quinone + NADH + 5 H(+)(in) = a quinol + NAD(+) + 4 H(+)(out). NDH-1 shuttles electrons from NADH, via FMN and iron-sulfur (Fe-S) centers, to quinones in the respiratory chain. The immediate electron acceptor for the enzyme in this species is believed to be ubiquinone. Couples the redox reaction to proton translocation (for every two electrons transferred, four hydrogen ions are translocated across the cytoplasmic membrane), and thus conserves the redox energy in a proton gradient. The polypeptide is NADH-quinone oxidoreductase subunit D (Ehrlichia chaffeensis (strain ATCC CRL-10679 / Arkansas)).